A 300-amino-acid polypeptide reads, in one-letter code: NAD kinase (300 aa).

Aspartate 75 acts as the Proton acceptor in catalysis. Residues 75 to 76 (DG), 149 to 150 (ND), arginine 177, aspartate 179, 190 to 195 (TAYALS), alanine 214, and glutamine 248 contribute to the NAD(+) site.

The protein belongs to the NAD kinase family. A divalent metal cation serves as cofactor.

Its subcellular location is the cytoplasm. The catalysed reaction is NAD(+) + ATP = ADP + NADP(+) + H(+). In terms of biological role, involved in the regulation of the intracellular balance of NAD and NADP, and is a key enzyme in the biosynthesis of NADP. Catalyzes specifically the phosphorylation on 2'-hydroxyl of the adenosine moiety of NAD to yield NADP. This is NAD kinase from Burkholderia lata (strain ATCC 17760 / DSM 23089 / LMG 22485 / NCIMB 9086 / R18194 / 383).